Reading from the N-terminus, the 285-residue chain is Bifunctional protein FolD (285 aa).

NADP(+)-binding positions include 165–167 (GRS) and serine 190.

The protein belongs to the tetrahydrofolate dehydrogenase/cyclohydrolase family. As to quaternary structure, homodimer.

It carries out the reaction (6R)-5,10-methylene-5,6,7,8-tetrahydrofolate + NADP(+) = (6R)-5,10-methenyltetrahydrofolate + NADPH. The enzyme catalyses (6R)-5,10-methenyltetrahydrofolate + H2O = (6R)-10-formyltetrahydrofolate + H(+). Its pathway is one-carbon metabolism; tetrahydrofolate interconversion. In terms of biological role, catalyzes the oxidation of 5,10-methylenetetrahydrofolate to 5,10-methenyltetrahydrofolate and then the hydrolysis of 5,10-methenyltetrahydrofolate to 10-formyltetrahydrofolate. The chain is Bifunctional protein FolD from Staphylococcus carnosus (strain TM300).